A 329-amino-acid chain; its full sequence is Glycerol-3-phosphate dehydrogenase [NAD(P)+] (329 aa).

NADPH-binding residues include Ser13, Trp14, His34, and Lys105. Positions 105, 134, and 136 each coordinate sn-glycerol 3-phosphate. Ala138 provides a ligand contact to NADPH. Lys189, Asp242, Ser252, Arg253, and Asn254 together coordinate sn-glycerol 3-phosphate. The Proton acceptor role is filled by Lys189. NADPH is bound at residue Arg253. Residues Val277 and Glu279 each coordinate NADPH.

Belongs to the NAD-dependent glycerol-3-phosphate dehydrogenase family.

The protein localises to the cytoplasm. The catalysed reaction is sn-glycerol 3-phosphate + NAD(+) = dihydroxyacetone phosphate + NADH + H(+). The enzyme catalyses sn-glycerol 3-phosphate + NADP(+) = dihydroxyacetone phosphate + NADPH + H(+). It participates in membrane lipid metabolism; glycerophospholipid metabolism. Catalyzes the reduction of the glycolytic intermediate dihydroxyacetone phosphate (DHAP) to sn-glycerol 3-phosphate (G3P), the key precursor for phospholipid synthesis. This chain is Glycerol-3-phosphate dehydrogenase [NAD(P)+], found in Legionella pneumophila (strain Corby).